We begin with the raw amino-acid sequence, 354 residues long: Multiple sugar-binding periplasmic receptor ChvE (354 aa).

Positions 1-25 (MKSIISLTAAAAIGVAMFVAPAFAA) are cleaved as a signal peptide.

It belongs to the bacterial solute-binding protein 2 family.

It localises to the periplasm. Its function is as follows. Required for effective transcriptional induction of the vir genes by monosaccharides in response to plant signals and for normal growth and chemotaxis towards certain sugars. Functions as a periplasmic multiple sugar-binding receptor protein. It does not interact with a transport system. The protein is Multiple sugar-binding periplasmic receptor ChvE (chvE) of Rhizobium radiobacter (Agrobacterium tumefaciens).